The chain runs to 425 residues: Proline iminopeptidase (425 aa).

One can recognise an AB hydrolase-1 domain in the interval 52 to 315 (PWLLYLQGGP…EFPALAWAQG (264 aa)). The active-site Nucleophile is S146. Residue D351 is part of the active site. The active-site Proton donor is the H404.

Belongs to the peptidase S33 family. Homotetramer.

It localises to the cytoplasm. The catalysed reaction is Release of N-terminal proline from a peptide.. Functionally, higher activity toward long peptides. Acts on hydroxyproline beta-naphthylamide with almost as high an activity as on proline beta-naphthylamide. The polypeptide is Proline iminopeptidase (pip) (Aeromonas sobria).